Consider the following 156-residue polypeptide: Transcriptional repressor NrdR (156 aa).

A zinc finger spans residues 3–34 (CPFCSETDTKVIDSRLVADGAQVRRRRECLTC). An ATP-cone domain is found at 49-139 (PRVIKQDGTR…VYRSFQDLSE (91 aa)).

The protein belongs to the NrdR family. Requires Zn(2+) as cofactor.

Negatively regulates transcription of bacterial ribonucleotide reductase nrd genes and operons by binding to NrdR-boxes. This is Transcriptional repressor NrdR from Saccharophagus degradans (strain 2-40 / ATCC 43961 / DSM 17024).